A 186-amino-acid polypeptide reads, in one-letter code: Large ribosomal subunit protein bL9 (186 aa).

A compositionally biased stretch (basic and acidic residues) spans 151 to 167 (PEEAEKQARGEAIMREE). Residues 151 to 186 (PEEAEKQARGEAIMREESEYELETGEEVAEGPEQTA) form a disordered region. Acidic residues predominate over residues 168–180 (SEYELETGEEVAE).

Belongs to the bacterial ribosomal protein bL9 family.

Binds to the 23S rRNA. The protein is Large ribosomal subunit protein bL9 of Acidiphilium cryptum (strain JF-5).